The chain runs to 326 residues: Peroxidase 6 (326 aa).

The N-terminal stretch at 1–20 (MKSFGLCLFILVSSPCLLQA) is a signal peptide. N21 is a glycosylation site (N-linked (GlcNAc...) asparagine). Disulfide bonds link C31–C112, C64–C69, C118–C318, and C197–C228. H62 functions as the Proton acceptor in the catalytic mechanism. Residues D63, V66, G68, D70, and S72 each coordinate Ca(2+). The N-linked (GlcNAc...) asparagine glycan is linked to N163. Residue H190 participates in heme b binding. T191 serves as a coordination point for Ca(2+). N206 and N230 each carry an N-linked (GlcNAc...) asparagine glycan. Residues D242, T245, and D250 each coordinate Ca(2+). A glycan (N-linked (GlcNAc...) asparagine) is linked at N274.

Belongs to the peroxidase family. Classical plant (class III) peroxidase subfamily. Heme b serves as cofactor. It depends on Ca(2+) as a cofactor.

It is found in the secreted. The catalysed reaction is 2 a phenolic donor + H2O2 = 2 a phenolic radical donor + 2 H2O. Its function is as follows. Removal of H(2)O(2), oxidation of toxic reductants, biosynthesis and degradation of lignin, suberization, auxin catabolism, response to environmental stresses such as wounding, pathogen attack and oxidative stress. These functions might be dependent on each isozyme/isoform in each plant tissue. This is Peroxidase 6 (PER6) from Arabidopsis thaliana (Mouse-ear cress).